A 553-amino-acid polypeptide reads, in one-letter code: Syntaxin-binding protein 4 (553 aa).

Phosphoserine is present on residues Ser10, Ser12, Ser99, and Ser212. The region spanning 19–105 (AFQMITIAKE…RLESAWEIAF (87 aa)) is the PDZ domain. The stretch at 291–417 (SSEADEMERL…VLDCQLRKSE (127 aa)) forms a coiled coil. At Ser463 the chain carries Phosphoserine. The 34-residue stretch at 496–529 (DCLPYGWEEAYTADGIKYFINHVTQTTSWIHPVM) folds into the WW domain.

Interacts with STX4A. Post-translationally, phosphorylated on Ser-99 by PKB/AKT2 after insulin treatment. Phosphorylation on Ser-99 abolishes the interaction with STX4A.

The protein localises to the cytoplasm. Plays a role in the translocation of transport vesicles from the cytoplasm to the plasma membrane. Inhibits the translocation of SLC2A4 from intracellular vesicles to the plasma membrane by STX4A binding and preventing the interaction between STX4A and VAMP2. Stimulation with insulin disrupts the interaction with STX4A, leading to increased levels of SLC2A4 at the plasma membrane. May also play a role in the regulation of insulin release by pancreatic beta cells after stimulation by glucose. This is Syntaxin-binding protein 4 (STXBP4) from Homo sapiens (Human).